A 350-amino-acid chain; its full sequence is Secreted effector protein PipB2 (350 aa).

Pentapeptide repeat domains lie at 162–201 (ANLTAENLCDADLSGADLEGAILFMADCDGANFKGANLSG), 202–241 (ASLGDSNLTNACLEDSIMCGATLDRANLTGANLQHTSLLG), 247–286 (CNCSGANMDHANVSGSTLIRADMSGATLKGATIMAAIMEG), and 287–326 (AVLTRANLQKASFTATNLDGADLSEANLRNTSFKDCTLTD).

As to quaternary structure, interacts with the host kinesin light chain (KLC), a subunit of the kinesin-1 motor complex.

It localises to the secreted. It is found in the host membrane. Functionally, effector proteins function to alter host cell physiology and promote bacterial survival in host tissues. Involved in the reorganization of late endosome/lysosome (LE/Lys) compartments in mammalian cells. Necessary and sufficient to link kinesin-1 onto the Salmonella-containing vacuole (SCV) membrane. Required for centrifugal extension of lysosomal glycoprotein-rich membrane tubules, known as Salmonella-induced filaments (Sifs), away from the SCV and toward the cell periphery. Required for virulence, but not for intracellular survival and replication in phagocytic cells. The sequence is that of Secreted effector protein PipB2 (pipB2) from Salmonella typhi.